Here is a 106-residue protein sequence, read N- to C-terminus: UPF0145 protein CPE0882 (106 aa).

Belongs to the UPF0145 family.

This Clostridium perfringens (strain 13 / Type A) protein is UPF0145 protein CPE0882.